Consider the following 78-residue polypeptide: Small ribosomal subunit protein bS16c (78 aa).

The protein belongs to the bacterial ribosomal protein bS16 family.

It localises to the plastid. The protein resides in the chloroplast. The protein is Small ribosomal subunit protein bS16c of Chara vulgaris (Common stonewort).